A 961-amino-acid chain; its full sequence is Aconitate hydratase A (961 aa).

[4Fe-4S] cluster-binding residues include Cys499, Cys565, and Cys568.

Belongs to the aconitase/IPM isomerase family. As to quaternary structure, monomer. [4Fe-4S] cluster serves as cofactor.

The enzyme catalyses citrate = D-threo-isocitrate. It carries out the reaction (2S,3R)-3-hydroxybutane-1,2,3-tricarboxylate = 2-methyl-cis-aconitate + H2O. It participates in carbohydrate metabolism; tricarboxylic acid cycle; isocitrate from oxaloacetate: step 2/2. Its pathway is organic acid metabolism; propanoate degradation. Functionally, involved in the catabolism of short chain fatty acids (SCFA) via the tricarboxylic acid (TCA)(acetyl degradation route) and probably via the 2-methylcitrate cycle I (propionate degradation route). Catalyzes the reversible isomerization of citrate to isocitrate via cis-aconitate. The apo form of AcnA functions as a RNA-binding regulatory protein. Could catalyze the hydration of 2-methyl-cis-aconitate to yield (2R,3S)-2-methylisocitrate. In Mycobacterium avium, this protein is Aconitate hydratase A (acn).